The primary structure comprises 348 residues: MFSNKQVIGVVFGGKSSEHEVSIKSAKTIYNALRYLSNKERYIARPIYIDKYGYWHDYIFSESILFDKKDHLIFEERRINLTNLSNMEDIDVWFPCLHGPNGEDGVIQGLFKSTGKPFVGSGVLGSALGMDKIAMKSVFKSYNLPQVPYISLNKPDIQNNLYMKSIYEQINKIISYPCFIKPANLGSSVGITKAYSKEEFIAGIEFAAKYDERIIVEKSIEGRELECGILGKSIMKSSVVGEVKFQTDWYTYESKYNANLSSTIIPADLNIEISNKIQKLAIEACKAINAYGLARVDFFYQESTQQIYINEVNTLPGFTKTSMYPTLWEASGLKLEKLVANLIEIAKE.

Positions 136–344 (KSVFKSYNLP…LEKLVANLIE (209 aa)) constitute an ATP-grasp domain. 171–226 (NKIISYPCFIKPANLGSSVGITKAYSKEEFIAGIEFAAKYDERIIVEKSIEGRELE) contacts ATP. Residues aspartate 297, glutamate 311, and asparagine 313 each coordinate Mg(2+).

It belongs to the D-alanine--D-alanine ligase family. Mg(2+) is required as a cofactor. Mn(2+) serves as cofactor.

It is found in the cytoplasm. It catalyses the reaction 2 D-alanine + ATP = D-alanyl-D-alanine + ADP + phosphate + H(+). It participates in cell wall biogenesis; peptidoglycan biosynthesis. Cell wall formation. The sequence is that of D-alanine--D-alanine ligase from Prochlorococcus marinus (strain NATL2A).